A 148-amino-acid polypeptide reads, in one-letter code: MKTMRGLRNCSNDAVTLDLTVHPPPPPPLPPPAPSTVSSSTASTSLSFDEEETSESKIGRLISEHPVIIFTRFSSCCMCHVMKKLLSTVGVHPTVIEIDDGEIAYLAVEAAPVLFIGGTCVGGFESLVALHLSGQLIPRLVEVGALWA.

A disordered region spans residues 16 to 55 (TLDLTVHPPPPPPLPPPAPSTVSSSTASTSLSFDEEETSE). The segment covering 22 to 34 (HPPPPPPLPPPAP) has biased composition (pro residues). The span at 35 to 47 (STVSSSTASTSLS) shows a compositional bias: low complexity. Residues 55–147 (ESKIGRLISE…PRLVEVGALW (93 aa)) form the Glutaredoxin domain. An intrachain disulfide couples C76 to C79.

Belongs to the glutaredoxin family. CC-type subfamily.

It localises to the cytoplasm. Functionally, has a glutathione-disulfide oxidoreductase activity in the presence of NADPH and glutathione reductase. Reduces low molecular weight disulfides and proteins. The chain is Glutaredoxin-C10 (GRXC10) from Arabidopsis thaliana (Mouse-ear cress).